Here is a 340-residue protein sequence, read N- to C-terminus: Armadillo repeat-containing protein 12 (340 aa).

Residues 1–101 (MGKTIPRFLE…NITRCVYLLE (101 aa)) are interaction with TBC1D15. ARM repeat units follow at residues 100–139 (LEAE…AFSG), 179–218 (LPDY…YLAQ), and 278–318 (SLHE…SLQC). A disordered region spans residues 321 to 340 (DLGSRPSSCRPSHSCFKTGK). Positions 324 to 340 (SRPSSCRPSHSCFKTGK) are enriched in low complexity.

As to quaternary structure, interacts with TBC1D15, TBC1D21, GK2 and IMMT. Interacts with VDAC2 and VDAC3 in a TBC1D21-dependent manner. Interacts (via ARM domains) with RBBP4. As to expression, testis-specific.

The protein localises to the nucleus. Its subcellular location is the mitochondrion outer membrane. Essential for male fertility and sperm mitochondrial sheath formation. Required for proper mitochondrial elongation and coiling along the flagellum during the formation of the mitochondrial sheath. Facilitates the growth and aggressiveness of neuroblastoma cells. Increases the EZH2 activity and H3K27me3 levels in a RBBP4-dependent manner, and facilitates the enrichment of polycomb repressive complex 2 and H3K27me3 on gene promoters, resulting in transcriptional repression of tumor suppressors affecting the proliferation, invasion, and metastasis of tumor cells. The chain is Armadillo repeat-containing protein 12 (Armc12) from Mus musculus (Mouse).